We begin with the raw amino-acid sequence, 805 residues long: Kinesin-like protein Klp10A (805 aa).

The tract at residues 1–274 is globular; it reads MDMITVGQSV…FVPLLDGQAV (274 aa). 2 disordered regions span residues 68 to 94 and 117 to 211; these read QHAA…SAIG and IPNP…RRSH. A compositionally biased stretch (polar residues) spans 80-94; that stretch reads APMNLSRNPTQSAIG. Low complexity predominate over residues 123 to 136; that stretch reads SSNSVNTNSNSNTT. A Phosphoserine modification is found at Ser-157. Residues 158-179 are compositionally biased toward polar residues; the sequence is QAATGQQQTRIASAVPNNTLPN. Low complexity predominate over residues 180–200; it reads PSAAASAGPAAQGVATAATTQ. The stretch at 205–244 forms a coiled coil; the sequence is ASTRRSHALKEVERLKENREKRRARQAEMKEEKVALMNQD. Residues 278 to 610 enclose the Kinesin motor domain; sequence QITVCVRKRP…LRYADRVKEL (333 aa). Position 368–375 (368–375) interacts with ATP; that stretch reads GQTGSGKT. Thr-630 is modified (phosphothreonine). The interval 633-688 is disordered; sequence EEEEELNMVHPHSHQLHPNSHAPASQSNNQRAPASHHSGAVIHNNNNNNNKNGNAG. Over residues 648–664 the composition is skewed to polar residues; the sequence is LHPNSHAPASQSNNQRA. Residues 676 to 688 are compositionally biased toward low complexity; sequence NNNNNNNKNGNAG. Phosphoserine occurs at positions 795, 797, and 800.

Belongs to the TRAFAC class myosin-kinesin ATPase superfamily. Kinesin family. MCAK/KIF2 subfamily. Interacts with Alms1a (via C-terminus). As to expression, expressed in male germline stem cells and spermatogonia (at protein level).

It localises to the cytoplasm. The protein localises to the cytoskeleton. It is found in the microtubule organizing center. Its subcellular location is the centrosome. The protein resides in the spindle pole. It localises to the chromosome. The protein localises to the centromere. In terms of biological role, required during anaphase to drive sister chromatid separation to promote flux by actively depolymerizing kinetochore microtubules at their pole-associated minus ends, thereby moving chromatids through a 'poleward flux'. Involved in asymmetric cell division of sensory organ precursor (SOP) cells by playing a role in the asymmetric localization of Sara-expressing endosomes to the pIIa daughter cell but not to the pIIb cell. Klp98A targets Sara-expressing endosomes to the central spindle which is symmetrically arranged in early cell division. During late cytokinesis, central spindle asymmetry is generated by enrichment of Patronin on the pIIb side which protects microtubules from depolymerization by Klp10A while unprotected microtubules on the pIIa side are disassembled by Klp10A, leading to the asymmetric delivery of Sara-expressing endosomes to the pIIa daughter cell. In Drosophila melanogaster (Fruit fly), this protein is Kinesin-like protein Klp10A.